Here is a 394-residue protein sequence, read N- to C-terminus: 2-aminobenzenesulfonate 2,3-dioxygenase subunit alpha (394 aa).

Residues 43–154 enclose the Rieske domain; it reads WKFVCHVSEI…TETYLGLVFV (112 aa). [2Fe-2S] cluster is bound by residues Cys-85, His-87, Cys-105, and His-108. Fe cation contacts are provided by His-209 and His-213.

It belongs to the bacterial ring-hydroxylating dioxygenase alpha subunit family. Heterotetramer with a alpha2beta2 structure. [2Fe-2S] cluster serves as cofactor. Requires Fe cation as cofactor.

The enzyme catalyses 2-aminobenzenesulfonate + NADH + O2 + 2 H(+) = 2,3-dihydroxybenzenesulfonate + NH4(+) + NAD(+). Inhibited by o-phenanthroline. In terms of biological role, alpha subunit of the oxygenase component of the 2-aminobenzenesulfonate 2,3-dioxygenase system (deaminating) (ABSDOS). Can use 2-aminobenzenesulfonate (ABS), benzenesulfonate (BS), 4-toluenesulfonate (TS), 2-nitrobenzenesulfonate, 3- and 4-aminobenzenesulfonates, 4-chloro- and 4-hydroxybenzenesulfonates and pyridine-3-sulfonate as substrates. No desulfonation of ABS to aminocatechol or aminophenol detected. In Alcaligenes sp, this protein is 2-aminobenzenesulfonate 2,3-dioxygenase subunit alpha.